The primary structure comprises 344 residues: Dihydroorotase (344 aa).

Zn(2+) is bound by residues histidine 14 and histidine 16. Residues histidine 16–arginine 18 and asparagine 42 each bind substrate. Lysine 100, histidine 137, and histidine 175 together coordinate Zn(2+). N6-carboxylysine is present on lysine 100. Histidine 137 is a binding site for substrate. Leucine 220 serves as a coordination point for substrate. Residue aspartate 248 coordinates Zn(2+). Aspartate 248 is an active-site residue. Histidine 252 and alanine 264 together coordinate substrate.

This sequence belongs to the metallo-dependent hydrolases superfamily. DHOase family. Class II DHOase subfamily. As to quaternary structure, homodimer. Zn(2+) is required as a cofactor.

It carries out the reaction (S)-dihydroorotate + H2O = N-carbamoyl-L-aspartate + H(+). The protein operates within pyrimidine metabolism; UMP biosynthesis via de novo pathway; (S)-dihydroorotate from bicarbonate: step 3/3. Catalyzes the reversible cyclization of carbamoyl aspartate to dihydroorotate. In Cupriavidus necator (strain ATCC 17699 / DSM 428 / KCTC 22496 / NCIMB 10442 / H16 / Stanier 337) (Ralstonia eutropha), this protein is Dihydroorotase.